Here is a 375-residue protein sequence, read N- to C-terminus: Growth/differentiation factor 8 (375 aa).

The N-terminal stretch at 1–23 (MQKLQIYVYIYLFMLIVAGPVDL) is a signal peptide. The propeptide occupies 24 to 266 (NENSEQKENV…VTDTPKRSRR (243 aa)). N-linked (GlcNAc...) asparagine glycosylation occurs at N71. Disulfide bonds link C272–C282, C281–C340, C309–C372, and C313–C374.

This sequence belongs to the TGF-beta family. As to quaternary structure, homodimer; disulfide-linked. Interacts with WFIKKN2, leading to inhibit its activity. Interacts with FSTL3. Post-translationally, synthesized as large precursor molecule that undergoes proteolytic cleavage to generate an N-terminal propeptide and a disulfide linked C-terminal dimer, which is the biologically active molecule. The circulating form consists of a latent complex of the C-terminal dimer and other proteins, including its propeptide, which maintain the C-terminal dimer in a latent, inactive state. Ligand activation requires additional cleavage of the prodomain by a tolloid-like metalloproteinase.

Its subcellular location is the secreted. In terms of biological role, acts specifically as a negative regulator of skeletal muscle growth. The polypeptide is Growth/differentiation factor 8 (MSTN) (Sus scrofa (Pig)).